Consider the following 137-residue polypeptide: Recombination protein uvsY (137 aa).

As to quaternary structure, homohexamer. Interacts with gp32.

Plays a role in viral DNA synthesis by promoting enzymatic activities of UvsX recombinase, by promoting UvsX-ssDNA filament assembly, and by helping UvsX to displace bound gp32 from ssDNA. This chain is Recombination protein uvsY (uvsY), found in Escherichia coli (Bacteriophage T4).